The chain runs to 534 residues: Prolyl 4-hydroxylase subunit alpha-2 (534 aa).

A signal peptide spans 1–21 (MKPWLCLVFFTSAFLIWHAEA). An N-linked (GlcNAc...) asparagine glycan is attached at Asn115. The stretch at 207-240 (VEILDYLSYAVFQFGDLHRAMELTRRLISLDSTH) is one TPR repeat. Asn263 carries N-linked (GlcNAc...) asparagine glycosylation. Positions 413-519 (TAELLQVANY…KWVSNKWFHE (107 aa)) constitute a Fe2OG dioxygenase domain. The Fe cation site is built by His431, Asp433, and His500. Lys510 contacts 2-oxoglutarate.

The protein belongs to the P4HA family. In terms of assembly, heterotetramer of two alpha-2 chains and two beta chains (the beta chain is the multi-functional PDI). Fe(2+) is required as a cofactor. L-ascorbate serves as cofactor.

It is found in the endoplasmic reticulum lumen. It carries out the reaction L-prolyl-[collagen] + 2-oxoglutarate + O2 = trans-4-hydroxy-L-prolyl-[collagen] + succinate + CO2. In terms of biological role, catalyzes the post-translational formation of 4-hydroxyproline in -Xaa-Pro-Gly- sequences in collagens and other proteins. This Gallus gallus (Chicken) protein is Prolyl 4-hydroxylase subunit alpha-2 (P4HA2).